Reading from the N-terminus, the 245-residue chain is Orotidine 5'-phosphate decarboxylase (245 aa).

Residues Asp22, Lys44, 71–80 (DLKFHDIPNT), Thr131, Arg192, Gln201, Gly221, and Arg222 each bind substrate. Residue Lys73 is the Proton donor of the active site.

It belongs to the OMP decarboxylase family. Type 1 subfamily. As to quaternary structure, homodimer.

It catalyses the reaction orotidine 5'-phosphate + H(+) = UMP + CO2. The protein operates within pyrimidine metabolism; UMP biosynthesis via de novo pathway; UMP from orotate: step 2/2. In terms of biological role, catalyzes the decarboxylation of orotidine 5'-monophosphate (OMP) to uridine 5'-monophosphate (UMP). The protein is Orotidine 5'-phosphate decarboxylase of Escherichia coli O157:H7.